A 245-amino-acid chain; its full sequence is Ribonuclease 3 (245 aa).

The 130-residue stretch at 19-148 (FKVFQEKIGI…FIGALYLDQG (130 aa)) folds into the RNase III domain. Glu61 contributes to the Mg(2+) binding site. Residue Asp65 is part of the active site. Residues Asp134 and Glu137 each contribute to the Mg(2+) site. The active site involves Glu137. Residues 174-243 (DYKSQLQELI…AAEALKKLKE (70 aa)) enclose the DRBM domain.

Belongs to the ribonuclease III family. Homodimer. Requires Mg(2+) as cofactor.

The protein resides in the cytoplasm. It catalyses the reaction Endonucleolytic cleavage to 5'-phosphomonoester.. Digests double-stranded RNA. Involved in the processing of primary rRNA transcript to yield the immediate precursors to the large and small rRNAs (23S and 16S). Processes some mRNAs, and tRNAs when they are encoded in the rRNA operon. Processes pre-crRNA and tracrRNA of type II CRISPR loci if present in the organism. The polypeptide is Ribonuclease 3 (Bacillus cereus (strain ZK / E33L)).